The chain runs to 257 residues: Urease accessory protein UreD 3 (257 aa).

The segment at 1–22 (MSVRATARLRAEPDGRDGTALP) is disordered.

This sequence belongs to the UreD family. As to quaternary structure, ureD, UreF and UreG form a complex that acts as a GTP-hydrolysis-dependent molecular chaperone, activating the urease apoprotein by helping to assemble the nickel containing metallocenter of UreC. The UreE protein probably delivers the nickel.

It localises to the cytoplasm. Functionally, required for maturation of urease via the functional incorporation of the urease nickel metallocenter. The sequence is that of Urease accessory protein UreD 3 from Streptomyces griseus subsp. griseus (strain JCM 4626 / CBS 651.72 / NBRC 13350 / KCC S-0626 / ISP 5235).